A 318-amino-acid polypeptide reads, in one-letter code: Acetyl-coenzyme A carboxylase carboxyl transferase subunit alpha (318 aa).

Residues 38 to 292 (ALDRKAEEML…GEAIAAMLGE (255 aa)) form the CoA carboxyltransferase C-terminal domain.

It belongs to the AccA family. Acetyl-CoA carboxylase is a heterohexamer composed of biotin carboxyl carrier protein (AccB), biotin carboxylase (AccC) and two subunits each of ACCase subunit alpha (AccA) and ACCase subunit beta (AccD).

The protein localises to the cytoplasm. The enzyme catalyses N(6)-carboxybiotinyl-L-lysyl-[protein] + acetyl-CoA = N(6)-biotinyl-L-lysyl-[protein] + malonyl-CoA. Its pathway is lipid metabolism; malonyl-CoA biosynthesis; malonyl-CoA from acetyl-CoA: step 1/1. In terms of biological role, component of the acetyl coenzyme A carboxylase (ACC) complex. First, biotin carboxylase catalyzes the carboxylation of biotin on its carrier protein (BCCP) and then the CO(2) group is transferred by the carboxyltransferase to acetyl-CoA to form malonyl-CoA. The chain is Acetyl-coenzyme A carboxylase carboxyl transferase subunit alpha from Paracoccus denitrificans (strain Pd 1222).